A 251-amino-acid polypeptide reads, in one-letter code: Flap endonuclease Xni (251 aa).

Asp-104 provides a ligand contact to Mg(2+). In terms of domain architecture, 5'-3' exonuclease spans Val-160 to Lys-250. Positions 171, 172, 180, 182, and 185 each coordinate K(+). The segment at Gly-184–Thr-189 is interaction with DNA.

It belongs to the Xni family. It depends on Mg(2+) as a cofactor. The cofactor is K(+).

Its function is as follows. Has flap endonuclease activity. During DNA replication, flap endonucleases cleave the 5'-overhanging flap structure that is generated by displacement synthesis when DNA polymerase encounters the 5'-end of a downstream Okazaki fragment. The chain is Flap endonuclease Xni from Yersinia pseudotuberculosis serotype I (strain IP32953).